A 412-amino-acid polypeptide reads, in one-letter code: Peptidase T (412 aa).

Residue histidine 81 participates in Zn(2+) binding. Aspartate 83 is a catalytic residue. Zn(2+) is bound at residue aspartate 144. Catalysis depends on glutamate 178, which acts as the Proton acceptor. Zn(2+) is bound by residues glutamate 179, aspartate 201, and histidine 383.

The protein belongs to the peptidase M20B family. The cofactor is Zn(2+).

Its subcellular location is the cytoplasm. It carries out the reaction Release of the N-terminal residue from a tripeptide.. Cleaves the N-terminal amino acid of tripeptides. The chain is Peptidase T from Bacillus cereus (strain Q1).